Consider the following 200-residue polypeptide: Snake venom metalloproteinase hemorrhagic factor 2 (200 aa).

The region spanning 4–200 (KYIELVVVAD…RKPQCILNKP (197 aa)) is the Peptidase M12B domain. Residue Glu7 participates in Ca(2+) binding. Asn70 carries N-linked (GlcNAc...) asparagine glycosylation. Residue Asp91 coordinates Ca(2+). 3 disulfides stabilise this stretch: Cys115-Cys195, Cys155-Cys179, and Cys157-Cys162. Zn(2+) is bound at residue His140. The active site involves Glu141. Residues His144 and His150 each coordinate Zn(2+). Positions 195 and 198 each coordinate Ca(2+).

The protein belongs to the venom metalloproteinase (M12B) family. P-I subfamily. As to quaternary structure, monomer. It depends on Zn(2+) as a cofactor. Expressed by the venom gland.

It localises to the secreted. Snake venom zinc metalloproteinase that induces weak hemorrhage and mild myonecrosis. Shows mild myotoxicity by killing myocytes. Also induces edema in the mouse footpad at doses where hemorrhage is absent. In vitro, degrades laminin, fibronectin, and type IV collagen, suggesting this toxin play a role in local tissue damage by degrading extracellular matrix, and possibly by degrading muscle extracellular matrix. Hemorrhage is not due to cytotoxicity towards endothelial cells in culture, and may only play a minor role in local bleeding characteristic of L.muta envenomations. Also induces the synthesis of several endogenous matrix metalloproteinases, which in turn, may participate in extracellular matrix degradation. In Lachesis muta muta (Bushmaster), this protein is Snake venom metalloproteinase hemorrhagic factor 2.